The chain runs to 378 residues: Zinc finger protein DPF3 (378 aa).

Lys99 participates in a covalent cross-link: Glycyl lysine isopeptide (Lys-Gly) (interchain with G-Cter in SUMO2). The interval 145–193 is disordered; the sequence is VLENDENVEEGNEEEDLEEDIPKRKNRTRGRARGSAGGRRRHDAASQED. The span at 148–163 shows a compositional bias: acidic residues; sequence NDENVEEGNEEEDLEE. Positions 168–186 are enriched in basic residues; sequence RKNRTRGRARGSAGGRRRH. The segment at 198–221 adopts a C2H2-type zinc-finger fold; the sequence is YVCDICGKRYKNRPGLSYHYAHTH. Positions 225 to 254 are disordered; that stretch reads EEGDEAQDQETRSPPNHRNENHRPQKGPDG. 2 PHD-type zinc fingers span residues 259 to 319 and 316 to 366; these read NNYC…CKSC and CKSC…CWEL. An interaction with HDGFL2 region spans residues 317 to 332; sequence KSCILCGTSENDDQLL. Residue Gly323 is modified to Phosphoserine.

This sequence belongs to the requiem/DPF family. Component of the BAF complex, which includes at least actin (ACTB), ARID1A, ARID1B/BAF250, SMARCA2, SMARCA4/BRG1/BAF190A, ACTL6A/BAF53, ACTL6B/BAF53B, SMARCE1/BAF57, SMARCC1/BAF155, SMARCC2/BAF170, SMARCB1/SNF5/INI1, and one or more of SMARCD1/BAF60A, SMARCD2/BAF60B, or SMARCD3/BAF60C. In muscle cells, the BAF complex also contains DPF3. Interacts with acetylated histones H3 and H4. Component of neuron-specific chromatin remodeling complex (nBAF complex) composed of at least, ARID1A/BAF250A or ARID1B/BAF250B, SMARCD1/BAF60A, SMARCD3/BAF60C, SMARCA2/BRM/BAF190B, SMARCA4/BRG1/BAF190A, SMARCB1/BAF47, SMARCC1/BAF155, SMARCE1/BAF57, SMARCC2/BAF170, DPF1/BAF45B, DPF3/BAF45C, ACTL6B/BAF53B and actin. As to quaternary structure, interacts with HDGFL2, SMARCA4/BRG1/BAF190A, SMARCC1/BAF155 and SMARCD1/BAF60A. In terms of processing, phosphorylation at Ser-323 enhances its interaction with HDGFL2.

It is found in the nucleus. Belongs to the neuron-specific chromatin remodeling complex (nBAF complex). During neural development a switch from a stem/progenitor to a post-mitotic chromatin remodeling mechanism occurs as neurons exit the cell cycle and become committed to their adult state. The transition from proliferating neural stem/progenitor cells to post-mitotic neurons requires a switch in subunit composition of the npBAF and nBAF complexes. As neural progenitors exit mitosis and differentiate into neurons, npBAF complexes which contain ACTL6A/BAF53A and PHF10/BAF45A, are exchanged for homologous alternative ACTL6B/BAF53B and DPF1/BAF45B or DPF3/BAF45C subunits in neuron-specific complexes (nBAF). The npBAF complex is essential for the self-renewal/proliferative capacity of the multipotent neural stem cells. The nBAF complex along with CREST plays a role regulating the activity of genes essential for dendrite growth. Muscle-specific component of the BAF complex, a multiprotein complex involved in transcriptional activation and repression of select genes by chromatin remodeling (alteration of DNA-nucleosome topology). Specifically binds acetylated lysines on histone 3 and 4 (H3K14ac, H3K9ac, H4K5ac, H4K8ac, H4K12ac, H4K16ac). In the complex, it acts as a tissue-specific anchor between histone acetylations and methylations and chromatin remodeling. It thereby probably plays an essential role in heart and skeletal muscle development. Its function is as follows. Acts as a regulator of myogenesis in cooperation with HDGFL2. Mediates the interaction of HDGFL2 with the BAF complex. HDGFL2-DPF3a activate myogenic genes by increasing chromatin accessibility through recruitment of SMARCA4/BRG1/BAF190A (ATPase subunit of the BAF complex) to myogenic gene promoters. The sequence is that of Zinc finger protein DPF3 (DPF3) from Homo sapiens (Human).